A 158-amino-acid polypeptide reads, in one-letter code: L-alanine exporter AlaE (158 aa).

A run of 4 helical transmembrane segments spans residues 23-43, 53-73, 92-112, and 117-137; these read FAMV…VSGM, LVAI…RDAV, VIAY…FVGA, and IITA…AYGY.

It belongs to the AlaE exporter family.

It localises to the cell inner membrane. In terms of biological role, exports L-alanine. This is L-alanine exporter AlaE from Cronobacter sakazakii (strain ATCC BAA-894) (Enterobacter sakazakii).